Reading from the N-terminus, the 168-residue chain is S-ribosylhomocysteine lyase (168 aa).

His54, His58, and Cys128 together coordinate Fe cation.

It belongs to the LuxS family. In terms of assembly, homodimer. Fe cation is required as a cofactor.

It carries out the reaction S-(5-deoxy-D-ribos-5-yl)-L-homocysteine = (S)-4,5-dihydroxypentane-2,3-dione + L-homocysteine. Involved in the synthesis of autoinducer 2 (AI-2) which is secreted by bacteria and is used to communicate both the cell density and the metabolic potential of the environment. The regulation of gene expression in response to changes in cell density is called quorum sensing. Catalyzes the transformation of S-ribosylhomocysteine (RHC) to homocysteine (HC) and 4,5-dihydroxy-2,3-pentadione (DPD). This chain is S-ribosylhomocysteine lyase, found in Neisseria meningitidis serogroup C / serotype 2a (strain ATCC 700532 / DSM 15464 / FAM18).